We begin with the raw amino-acid sequence, 117 residues long: Large ribosomal subunit protein bL20c (117 aa).

This sequence belongs to the bacterial ribosomal protein bL20 family.

It is found in the plastid. Its subcellular location is the chloroplast. Functionally, binds directly to 23S ribosomal RNA and is necessary for the in vitro assembly process of the 50S ribosomal subunit. It is not involved in the protein synthesizing functions of that subunit. This Lemna minor (Common duckweed) protein is Large ribosomal subunit protein bL20c.